The chain runs to 695 residues: MQLSVLIASVLAAGAAVDAASYTPQNVSCPDNANFIRNAADGLSPAEKEWLKKRDPITRDALQTFLRRAFANVSTEITSALFNDTENVPKLGIAVAGGGYRAMFVGAGAFAAMDNRTDGANEHGLGGLLQAATYMAGLSGGNWLTGTLAYNNFTSVQQILEEGDKADAIWNITNSFLNPYDKDFSKTLARWTAIGSQVQGKRDAGFNVTITDLWSRALAYGWFPTLPNAGAGLTWSSLRDNEIFMNGEMPMPISVADGRYPGTTVINLNATVFEMTPFEIGSWDPSLNAFSDIKYLGTQVTDGKPETERCINGFDDASFIMGTSSSLFNEFTMSNDSAVAYTYLNTLSSTLVKGIDKENNDIAMYAPNPFKGSKYVDSNYTTSIVDSDSLFLVDGGEDLQGIPFVPLLKQERDLDIIFAIDVDTETSDNYPAGGPMMKTYERQFSKQGKGMAFPYVPDMTTFVNLGLGGKPSFYGCDANNLTDLEYIPPLIVYIPNSYHSFESNVSTFKLNYNYSERVGMIRNAFEATTRNNLTEDADYVTCVGCAIIRRKQQSLNLTLPDICDKCFTNYCWNGTIDNTPTKLLTPNNQDPAAISSAIAAVTDDSPIGALLNTGSGTKSNSSSKTNSTLVTSSRATSTGTLISNSSSNSTVSSTAARSSTSSTAKKNAGSVLKLEFSKSASVMVAIAAAAVASLI.

Positions 1–19 (MQLSVLIASVLAAGAAVDA) are cleaved as a signal peptide. N-linked (GlcNAc...) asparagine glycans are attached at residues Asn26, Asn72, Asn83, Asn115, Asn152, Asn171, Asn207, Asn269, Asn335, Asn379, Asn480, Asn504, Asn513, Asn532, Asn556, Asn573, Asn620, Asn626, Asn644, and Asn648. One can recognise a PLA2c domain in the interval 28-577 (SCPDNANFIR…TNYCWNGTID (550 aa)). Residues 612–662 (NTGSGTKSNSSSKTNSTLVTSSRATSTGTLISNSSSNSTVSSTAARSSTSS) form a disordered region.

The protein belongs to the lysophospholipase family.

It localises to the secreted. Its subcellular location is the cell wall. It catalyses the reaction a 1-acyl-sn-glycero-3-phosphocholine + H2O = sn-glycerol 3-phosphocholine + a fatty acid + H(+). Catalyzes the release of fatty acids from lysophospholipids. Phospholipase B may well contribute to pathogenicity by abetting the fungus in damaging and traversing host cell membranes, processes which likely increase the rapidity of disseminated infection. This Candida glabrata (strain ATCC 2001 / BCRC 20586 / JCM 3761 / NBRC 0622 / NRRL Y-65 / CBS 138) (Yeast) protein is Lysophospholipase 2.